A 347-amino-acid chain; its full sequence is Gamma-glutamyl hydrolase 2 (347 aa).

The signal sequence occupies residues 1-22 (MWSYVWLPLVALSLFKDSIIMA). Residues 45 to 341 (APDPNLNYRP…IGYDEVYIFT (297 aa)) enclose the Gamma-glutamyl hydrolase domain. Cys-155 (nucleophile) is an active-site residue. His-268 acts as the Proton donor in catalysis.

It belongs to the peptidase C26 family. Expressed in roots, in leaves, stems and siliques.

Its subcellular location is the vacuole. It localises to the secreted. It is found in the extracellular space. The protein localises to the cell wall. The catalysed reaction is (6S)-5,6,7,8-tetrahydrofolyl-(gamma-L-Glu)(n) + (n-1) H2O = (6S)-5,6,7,8-tetrahydrofolate + (n-1) L-glutamate. In terms of biological role, cleaves the polyglutamate sidechains of folate polyglutamates in the vacuole. Is important for polyglutamyl tail length determination before vacuolar exit. Plays a role on folate stability and intracellular folate content. Has endopeptidase activity against 4-amino-10-methylpteroyl penta-, tetra-, tri- and di-gamma-L-glutamate substrates and is responsible for the production of folic acid, also called pteroylglutamic acid (PteGlu) from teroylpolyglutamates. The chain is Gamma-glutamyl hydrolase 2 (GGH2) from Arabidopsis thaliana (Mouse-ear cress).